Consider the following 223-residue polypeptide: Protein disulfide-isomerase-like protein EhSep2 (223 aa).

An N-terminal signal peptide occupies residues 1–17 (MALRSLTLLCAAAGASA). Residues 18 to 125 (GAIELTPDNF…DELKKFAENE (108 aa)) form the Thioredoxin domain. Residue U47 is a non-standard amino acid, selenocysteine. The stretch at 155–201 (EKRTEMLETLKKELADAESTHEALLKELQATYKESMDKLEKLKEESA) forms a coiled coil. The tract at residues 201 to 223 (APKIKLLKAATPAPKAEGAKDEV) is disordered. The segment covering 203–216 (KIKLLKAATPAPKA) has biased composition (low complexity). The short motif at 220-223 (KDEV) is the Prevents secretion from ER element.

The protein belongs to the protein disulfide isomerase family.

The protein resides in the endoplasmic reticulum lumen. In Emiliania huxleyi (Coccolithophore), this protein is Protein disulfide-isomerase-like protein EhSep2 (SEP2).